A 348-amino-acid chain; its full sequence is Structural glycoprotein p40 (348 aa).

It belongs to the baculoviridae gp41 family. Post-translationally, O-glycosylated; contains N-acetylglucosamine side chains.

This Bombyx mori nuclear polyhedrosis virus (BmNPV) protein is Structural glycoprotein p40 (P40).